The following is a 606-amino-acid chain: Chaperone protein DnaK (606 aa).

Thr174 bears the Phosphothreonine; by autocatalysis mark. The tract at residues 576 to 606 (QAAGSANPGGSQGTSQGNVYEADYKVEDDNK) is disordered. Residues 597–606 (ADYKVEDDNK) are compositionally biased toward basic and acidic residues.

Belongs to the heat shock protein 70 family.

Its function is as follows. Acts as a chaperone. The chain is Chaperone protein DnaK from Caldanaerobacter subterraneus subsp. tengcongensis (strain DSM 15242 / JCM 11007 / NBRC 100824 / MB4) (Thermoanaerobacter tengcongensis).